We begin with the raw amino-acid sequence, 371 residues long: Gustatory and pheromone receptor 39a, isoform A (371 aa).

Residues 1–41 (MSKVCRDLRIYLRLLHIMGMMCWHFDSDHCQLVATSGSERY) are Cytoplasmic-facing. Residues 42 to 62 (AVVYAGCILVSTTAGFIFALL) form a helical membrane-spanning segment. The Extracellular segment spans residues 63-80 (HPSRFHIAIYNQTGNFYE). N-linked (GlcNAc...) asparagine glycosylation is present at N73. A helical transmembrane segment spans residues 81-101 (AVIFRSTCVVLFLVYVILYAW). Residues 102-127 (RHRYRDLVQHILRLNRRCASSCTNQQ) lie on the Cytoplasmic side of the membrane. Residues 128–148 (FLHNIILYGMLTILCFGNYLH) traverse the membrane as a helical segment. Over 149 to 161 (GYTRAGLATLPLA) the chain is Extracellular. Residues 162 to 182 (LCMLVYIFAFLVLCLLLMFFV) traverse the membrane as a helical segment. Topologically, residues 183–228 (SLKQVMTAGLIHYNQQLCQGDLISGLRGRQQILKLCGGELNECFGL) are cytoplasmic. The chain crosses the membrane as a helical span at residues 229–249 (LMLPIVALVLLMAPSGPFFLI). Residues 250 to 263 (STVLEGKFRPDECL) are Extracellular-facing. Residues 264–284 (IMLLTSSTWDTPWMIMLVLML) traverse the membrane as a helical segment. The Cytoplasmic segment spans residues 285-340 (RTNGISEEANKTAKMLTKVPRTGTGLDRMIEKFLLKNLRQKPILTAYGFFALDKST). A helical transmembrane segment spans residues 341-361 (LFKLFTAIFTYMVILVQFKEM). Residues 362–371 (ENSTKSINKF) lie on the Extracellular side of the membrane. The N-linked (GlcNAc...) asparagine glycan is linked to N363.

Belongs to the insect chemoreceptor superfamily. Gustatory receptor (GR) family. Gr21a subfamily. Expressed in the adult labellar chemosensory neurons, and adult thorax and wing. In larvae, is expressed in neurons of the posterior pharyngeal sense organ.

It is found in the cell membrane. Its function is as follows. Gustatory receptor which mediates acceptance or avoidance behavior, depending on its substrates. Plays a role in sustaining courtship behavior in males, possibly through the reception of a stimulating arrestant pheromone. The protein is Gustatory and pheromone receptor 39a, isoform A (Gr39a) of Drosophila melanogaster (Fruit fly).